The sequence spans 793 residues: Phenylalanine--tRNA ligase beta subunit (793 aa).

In terms of domain architecture, tRNA-binding spans 40–159 (SKLNTKLVIG…MDEMVGREIS (120 aa)). The B5 domain occupies 401–476 (NYDNVYSITL…RLYGYDNIIE (76 aa)). Positions 454, 460, 463, and 464 each coordinate Mg(2+). One can recognise an FDX-ACB domain in the interval 701-793 (SKFQKSTRDI…NLKELKVKVR (93 aa)).

This sequence belongs to the phenylalanyl-tRNA synthetase beta subunit family. Type 1 subfamily. As to quaternary structure, tetramer of two alpha and two beta subunits. Requires Mg(2+) as cofactor.

It localises to the cytoplasm. The catalysed reaction is tRNA(Phe) + L-phenylalanine + ATP = L-phenylalanyl-tRNA(Phe) + AMP + diphosphate + H(+). In Mesoplasma florum (strain ATCC 33453 / NBRC 100688 / NCTC 11704 / L1) (Acholeplasma florum), this protein is Phenylalanine--tRNA ligase beta subunit.